Reading from the N-terminus, the 397-residue chain is Tryptophan synthase beta chain (397 aa).

K87 carries the post-translational modification N6-(pyridoxal phosphate)lysine.

Belongs to the TrpB family. Tetramer of two alpha and two beta chains. Pyridoxal 5'-phosphate is required as a cofactor.

The enzyme catalyses (1S,2R)-1-C-(indol-3-yl)glycerol 3-phosphate + L-serine = D-glyceraldehyde 3-phosphate + L-tryptophan + H2O. Its pathway is amino-acid biosynthesis; L-tryptophan biosynthesis; L-tryptophan from chorismate: step 5/5. In terms of biological role, the beta subunit is responsible for the synthesis of L-tryptophan from indole and L-serine. This chain is Tryptophan synthase beta chain, found in Salmonella choleraesuis (strain SC-B67).